Reading from the N-terminus, the 199-residue chain is HTH-type transcriptional repressor NemR (199 aa).

Residues 7 to 67 (HDTREHLLAT…AMLERHYAAY (61 aa)) enclose the HTH tetR-type domain. The segment at residues 30 to 49 (GLSELLKTAEVPKGSFYHYF) is a DNA-binding region (H-T-H motif).

Its function is as follows. Involved in response to both electrophiles and reactive chlorine species (RCS). Represses the transcription of the nemRA-gloA operon by binding to the NemR box. This Escherichia coli O6:H1 (strain CFT073 / ATCC 700928 / UPEC) protein is HTH-type transcriptional repressor NemR (nemR).